Reading from the N-terminus, the 314-residue chain is Ornithine carbamoyltransferase (314 aa).

Carbamoyl phosphate contacts are provided by residues 58-61 (STRT), Gln-85, Arg-109, and 136-139 (HPLQ). Residues Asn-168, Asp-232, and 236–237 (SM) each bind L-ornithine. Carbamoyl phosphate contacts are provided by residues 272-273 (CL) and Arg-300.

Belongs to the aspartate/ornithine carbamoyltransferase superfamily. OTCase family.

Its subcellular location is the cytoplasm. It catalyses the reaction carbamoyl phosphate + L-ornithine = L-citrulline + phosphate + H(+). Its pathway is amino-acid biosynthesis; L-arginine biosynthesis; L-arginine from L-ornithine and carbamoyl phosphate: step 1/3. Functionally, reversibly catalyzes the transfer of the carbamoyl group from carbamoyl phosphate (CP) to the N(epsilon) atom of ornithine (ORN) to produce L-citrulline. This chain is Ornithine carbamoyltransferase, found in Hyperthermus butylicus (strain DSM 5456 / JCM 9403 / PLM1-5).